The following is a 577-amino-acid chain: Moesin (577 aa).

The FERM domain occupies 2–295; the sequence is PKTISVRVTT…GNHELYMRRR (294 aa). Residue serine 74 is modified to Phosphoserine. N6-acetyllysine is present on lysine 79. An N6-succinyllysine modification is found at lysine 83. Residues 115 to 120 carry the [IL]-x-C-x-x-[DE] motif motif; sequence IYCPPE. Phosphotyrosine is present on tyrosine 116. Cysteine 117 carries the S-nitrosocysteine modification. Lysine 139 and lysine 165 each carry N6-acetyllysine. Disordered regions lie at residues 323 to 342, 375 to 409, and 466 to 518; these read LENE…KIER, LEQE…ASRD, and AMST…NERV. Basic and acidic residues predominate over residues 375-401; sequence LEQERKRAQSEAEKLAKERQEAEEAKE. Serine 407 carries the phosphoserine modification. A compositionally biased stretch (acidic residues) spans 476–487; that stretch reads AENEQDEQDENG. Residues 492–518 show a composition bias toward basic and acidic residues; sequence ADLRADAMAKDRSEEERTTEAEKNERV. At serine 527 the chain carries Phosphoserine. The residue at position 558 (threonine 558) is a Phosphothreonine; by ROCK2 and STK10.

As to quaternary structure, in resting T-cells, part of a PAG1-NHERF1-MSN complex which is disrupted upon TCR activation. Interacts with NHERF1. Interacts with PPP1R16B. Interacts with SELPLG and SYK; these interactions mediate the activation of SYK by SELPLG. Interacts with PDPN (via cytoplasmic domain); this interaction activates RHOA and promotes epithelial-mesenchymal transition. Interacts with SPN/CD43 cytoplasmic tail. Interacts with CD44. Interacts with ICAM2. Interacts with ICAM3 (via C-terminus). Interacts with PDZD8. Interacts with F-actin. Interacts with CD46. Interacts with PTPN6. (Microbial infection) Interacts with HIV-1 envelope protein gp120. In terms of processing, phosphorylation on Thr-558 is crucial for the formation of microvilli-like structures. Phosphorylation by ROCK2 suppresses the head-to-tail association of the N-terminal and C-terminal halves resulting in an opened conformation which is capable of actin and membrane-binding. Phosphorylation on Thr-558 by STK10 negatively regulates lymphocyte migration and polarization. Post-translationally, S-nitrosylation of Cys-117 is induced by interferon-gamma and oxidatively-modified low-densitity lipoprotein (LDL(ox)) implicating the iNOS-S100A8/9 transnitrosylase complex. As to expression, in all tissues and cultured cells studied.

The protein localises to the cell membrane. It localises to the cytoplasm. The protein resides in the cytoskeleton. Its subcellular location is the apical cell membrane. It is found in the cell projection. The protein localises to the microvillus membrane. It localises to the microvillus. Its activity is regulated as follows. A head-to-tail association, of the N-terminal and C-terminal halves results in a closed conformation (inactive form) which is incapable of actin or membrane-binding. In terms of biological role, ezrin-radixin-moesin (ERM) family protein that connects the actin cytoskeleton to the plasma membrane and thereby regulates the structure and function of specific domains of the cell cortex. Tethers actin filaments by oscillating between a resting and an activated state providing transient interactions between moesin and the actin cytoskeleton. Once phosphorylated on its C-terminal threonine, moesin is activated leading to interaction with F-actin and cytoskeletal rearrangement. These rearrangements regulate many cellular processes, including cell shape determination, membrane transport, and signal transduction. The role of moesin is particularly important in immunity acting on both T and B-cells homeostasis and self-tolerance, regulating lymphocyte egress from lymphoid organs. Modulates phagolysosomal biogenesis in macrophages. Also participates in immunologic synapse formation. In Homo sapiens (Human), this protein is Moesin.